The sequence spans 314 residues: Quinolinate synthase (314 aa).

Iminosuccinate-binding residues include His27 and Ser44. Cys89 provides a ligand contact to [4Fe-4S] cluster. Iminosuccinate-binding positions include 115 to 117 (YIN) and Ser132. Cys175 is a [4Fe-4S] cluster binding site. Iminosuccinate is bound by residues 201 to 203 (HPE) and Thr218. Cys271 is a binding site for [4Fe-4S] cluster.

The protein belongs to the quinolinate synthase family. Type 2 subfamily. It depends on [4Fe-4S] cluster as a cofactor.

The protein resides in the cytoplasm. It catalyses the reaction iminosuccinate + dihydroxyacetone phosphate = quinolinate + phosphate + 2 H2O + H(+). It functions in the pathway cofactor biosynthesis; NAD(+) biosynthesis; quinolinate from iminoaspartate: step 1/1. In terms of biological role, catalyzes the condensation of iminoaspartate with dihydroxyacetone phosphate to form quinolinate. The polypeptide is Quinolinate synthase (Ehrlichia chaffeensis (strain ATCC CRL-10679 / Arkansas)).